A 428-amino-acid polypeptide reads, in one-letter code: C4-dicarboxylate transport protein (428 aa).

8 helical membrane-spanning segments follow: residues Val-8–Pro-28, Leu-44–Met-64, Leu-78–Ile-98, Gly-148–Gly-168, Val-184–Met-204, Leu-222–Ala-242, Ile-307–Met-327, and Ala-355–Ile-375.

It belongs to the dicarboxylate/amino acid:cation symporter (DAACS) (TC 2.A.23) family.

The protein localises to the cell inner membrane. In terms of biological role, responsible for the transport of dicarboxylates such as succinate, fumarate, and malate from the periplasm across the membrane. This is C4-dicarboxylate transport protein from Burkholderia mallei (strain ATCC 23344).